The chain runs to 360 residues: Homoserine O-succinyltransferase (360 aa).

Cysteine 146 acts as the Acyl-thioester intermediate in catalysis. Positions 167 and 196 each coordinate substrate. The Proton acceptor role is filled by histidine 239. Glutamate 241 is a catalytic residue. Arginine 253 lines the substrate pocket.

This sequence belongs to the MetA family.

The protein resides in the cytoplasm. It carries out the reaction L-homoserine + succinyl-CoA = O-succinyl-L-homoserine + CoA. It functions in the pathway amino-acid biosynthesis; L-methionine biosynthesis via de novo pathway; O-succinyl-L-homoserine from L-homoserine: step 1/1. Its function is as follows. Transfers a succinyl group from succinyl-CoA to L-homoserine, forming succinyl-L-homoserine. In vitro, can also use glutaryl-CoA as acyl donor. The polypeptide is Homoserine O-succinyltransferase (Thiothrix nivea (strain ATCC 35100 / DSM 5205 / JP2)).